A 166-amino-acid chain; its full sequence is 3-hydroxyacyl-[acyl-carrier-protein] dehydratase FabZ (166 aa).

His72 is a catalytic residue.

The protein belongs to the thioester dehydratase family. FabZ subfamily.

It localises to the cytoplasm. The catalysed reaction is a (3R)-hydroxyacyl-[ACP] = a (2E)-enoyl-[ACP] + H2O. Involved in unsaturated fatty acids biosynthesis. Catalyzes the dehydration of short chain beta-hydroxyacyl-ACPs and long chain saturated and unsaturated beta-hydroxyacyl-ACPs. The chain is 3-hydroxyacyl-[acyl-carrier-protein] dehydratase FabZ from Synechococcus sp. (strain JA-2-3B'a(2-13)) (Cyanobacteria bacterium Yellowstone B-Prime).